A 445-amino-acid polypeptide reads, in one-letter code: Rab GDP dissociation inhibitor beta (445 aa).

Position 1 is an N-acetylmethionine (M1). An N6-succinyllysine modification is found at K57. K112 bears the N6-acetyllysine mark. S130 bears the Phosphoserine mark. An N6-acetyllysine modification is found at K269. A Phosphoserine modification is found at S382.

The protein belongs to the Rab GDI family. As to quaternary structure, interacts with RHOH. Interacts with the GDP-bound inactive forms of RAB3A, RAB3B, RAB3C, RAB5A, RAB5B, RAB5C, RAB8A, RAB8B, RAB10, RAB12, RAB35, and RAB43; binds RAB3D to a lesser extent. Interacts with DZIP1; this interaction negatively regulates the interaction of GDI2 with GDP-bound RAB8A. As to expression, ubiquitously expressed.

The protein resides in the cytoplasm. It is found in the membrane. It localises to the golgi apparatus. The protein localises to the trans-Golgi network. In terms of biological role, GDP-dissociation inhibitor preventing the GDP to GTP exchange of most Rab proteins. By keeping these small GTPases in their inactive GDP-bound form regulates intracellular membrane trafficking. Negatively regulates protein transport to the cilium and ciliogenesis through the inhibition of RAB8A. The sequence is that of Rab GDP dissociation inhibitor beta (GDI2) from Bos taurus (Bovine).